A 548-amino-acid chain; its full sequence is Chaperonin GroEL (548 aa).

ATP-binding positions include 29-32 (TLGP), lysine 50, 86-90 (DGTTT), glycine 416, and aspartate 497.

The protein belongs to the chaperonin (HSP60) family. As to quaternary structure, forms a cylinder of 14 subunits composed of two heptameric rings stacked back-to-back. Interacts with the co-chaperonin GroES.

It localises to the cytoplasm. The enzyme catalyses ATP + H2O + a folded polypeptide = ADP + phosphate + an unfolded polypeptide.. In terms of biological role, together with its co-chaperonin GroES, plays an essential role in assisting protein folding. The GroEL-GroES system forms a nano-cage that allows encapsulation of the non-native substrate proteins and provides a physical environment optimized to promote and accelerate protein folding. The chain is Chaperonin GroEL from Neorickettsia sennetsu (strain ATCC VR-367 / Miyayama) (Ehrlichia sennetsu).